The chain runs to 500 residues: Glycerol kinase (500 aa).

ADP is bound at residue T12. ATP is bound by residues T12, T13, and S14. T12 lines the sn-glycerol 3-phosphate pocket. R16 lines the ADP pocket. R82, E83, Y135, and D245 together coordinate sn-glycerol 3-phosphate. Residues R82, E83, Y135, D245, and Q246 each coordinate glycerol. Positions 267 and 310 each coordinate ADP. The ATP site is built by T267, G310, Q314, and G411. The ADP site is built by G411 and N415.

The protein belongs to the FGGY kinase family. Homotetramer and homodimer (in equilibrium).

It catalyses the reaction glycerol + ATP = sn-glycerol 3-phosphate + ADP + H(+). Its pathway is polyol metabolism; glycerol degradation via glycerol kinase pathway; sn-glycerol 3-phosphate from glycerol: step 1/1. With respect to regulation, activated by phosphorylation and inhibited by fructose 1,6-bisphosphate (FBP). Functionally, key enzyme in the regulation of glycerol uptake and metabolism. Catalyzes the phosphorylation of glycerol to yield sn-glycerol 3-phosphate. This Clostridium perfringens (strain 13 / Type A) protein is Glycerol kinase.